A 441-amino-acid chain; its full sequence is Deoxyguanosinetriphosphate triphosphohydrolase-like protein (441 aa).

Positions 59–250 constitute an HD domain; that stretch reads RLTHSLEVSQ…MELADDTAYA (192 aa).

This sequence belongs to the dGTPase family. Type 2 subfamily.

This Shewanella loihica (strain ATCC BAA-1088 / PV-4) protein is Deoxyguanosinetriphosphate triphosphohydrolase-like protein.